We begin with the raw amino-acid sequence, 101 residues long: uncharacterized protein (101 aa).

The disordered stretch occupies residues 39-74 (CDERHGRPLPHSQESQHGSATSKKAVRGTADTAPLE). A compositionally biased stretch (polar residues) spans 50-60 (SQESQHGSATS).

This is an uncharacterized protein from Homo sapiens (Human).